We begin with the raw amino-acid sequence, 412 residues long: Mast cell carboxypeptidase A (412 aa).

An N-terminal signal peptide occupies residues 1 to 10; it reads LMGVIYSTLA. Positions 11–104 are cleaved as a propeptide — activation peptide; that stretch reads IAPVQFDREK…IDKQFDVKEE (94 aa). The Peptidase M14 domain occupies 113–407; that stretch reads KYNDWNKIVS…LSVKFIAKYI (295 aa). 2 disulfides stabilise this stretch: cysteine 168–cysteine 181 and cysteine 240–cysteine 263. Residues histidine 171 and glutamate 174 each contribute to the Zn(2+) site. Histidine 299 lines the Zn(2+) pocket. The Proton donor/acceptor role is filled by glutamate 373.

The protein belongs to the peptidase M14 family. It depends on Zn(2+) as a cofactor.

It localises to the cytoplasmic vesicle. The protein resides in the secretory vesicle. It catalyses the reaction Release of a C-terminal amino acid, but little or no action with -Asp, -Glu, -Arg, -Lys or -Pro.. The sequence is that of Mast cell carboxypeptidase A (Cpa3) from Rattus norvegicus (Rat).